A 537-amino-acid polypeptide reads, in one-letter code: Small conductance calcium-activated potassium channel protein 1 (537 aa).

The segment covering 1-10 has biased composition (polar residues); sequence MSSHSHNGSV. The tract at residues 1-90 is disordered; it reads MSSHSHNGSV…GKPPTVSHRL (90 aa). Residues 65–76 show a composition bias toward acidic residues; that stretch reads QEEEEEEEEEED. Residues 108-128 form a helical membrane-spanning segment; the sequence is LIFGMFGIVVMVTETELSWGV. A helical transmembrane segment spans residues 137–157; it reads FALKCLISLSTVILLGLVILY. The chain crosses the membrane as a helical span at residues 176 to 196; sequence IAMTWERVSLISLELVVCAIH. Residues 225 to 245 form a helical membrane-spanning segment; it reads VLLSIPMFLRLYLLARVMLLH. A helical membrane pass occupies residues 274 to 294; it reads LMTICPGTVLLVFSVSSWIVA. Residues 314 to 334 constitute an intramembrane region (pore-forming); the sequence is FLGAMWLISITFLSIGYGDMV. Residues 343-363 form a segment S6 region; that stretch reads VCLLTGIMGAGCTALVVAVVA. The segment at 381–460 is calmodulin-binding; that stretch reads DTQLTKRVKN…LAELAKAQSI (80 aa).

The protein belongs to the potassium channel KCNN family. KCa2.1/KCNN1 subfamily. As to quaternary structure, homodimer. Heteromultimer with KCNN2 and KCNN3. The complex is composed of 4 channel subunits each of which binds to a calmodulin subunit which regulates the channel activity through calcium-binding. Interacts with calmodulin. Highest expression in brain and liver with lower levels in heart, testis, kidney and colon. In colon, detected in smooth muscle cells. Expressed in atrial and ventricular myocytes with higher levels in atrial myocytes.

Its subcellular location is the membrane. It is found in the cytoplasm. The protein localises to the myofibril. The protein resides in the sarcomere. It localises to the z line. It catalyses the reaction K(+)(in) = K(+)(out). Its activity is regulated as follows. Inhibited by bee venom neurotoxin apamin. Inhibited by d-tubocurarine and tetraethylammonium (TEA). In terms of biological role, small conductance calcium-activated potassium channel that mediates the voltage-independent transmembrane transfer of potassium across the cell membrane through a constitutive interaction with calmodulin which binds the intracellular calcium allowing its opening. The current is characterized by a voltage-independent activation, an intracellular calcium concentration increase-dependent activation and a single-channel conductance of about 3 picosiemens. Also presents an inwardly rectifying current, thus reducing its already small outward conductance of potassium ions, which is particularly the case when the membrane potential displays positive values, above + 20 mV. Activation is followed by membrane hyperpolarization. Thought to regulate neuronal excitability by contributing to the slow component of synaptic afterhyperpolarization. This is Small conductance calcium-activated potassium channel protein 1 from Mus musculus (Mouse).